The primary structure comprises 342 residues: UDP-3-O-acylglucosamine N-acyltransferase (342 aa).

The active-site Proton acceptor is His238.

It belongs to the transferase hexapeptide repeat family. LpxD subfamily. Homotrimer.

It carries out the reaction a UDP-3-O-[(3R)-3-hydroxyacyl]-alpha-D-glucosamine + a (3R)-hydroxyacyl-[ACP] = a UDP-2-N,3-O-bis[(3R)-3-hydroxyacyl]-alpha-D-glucosamine + holo-[ACP] + H(+). It participates in bacterial outer membrane biogenesis; LPS lipid A biosynthesis. Catalyzes the N-acylation of UDP-3-O-acylglucosamine using 3-hydroxyacyl-ACP as the acyl donor. Is involved in the biosynthesis of lipid A, a phosphorylated glycolipid that anchors the lipopolysaccharide to the outer membrane of the cell. In Tolumonas auensis (strain DSM 9187 / NBRC 110442 / TA 4), this protein is UDP-3-O-acylglucosamine N-acyltransferase.